The chain runs to 128 residues: Protein ripply2 (128 aa).

Residues 1-64 (MDTTESAESA…ALPSGPGMAE (64 aa)) form a disordered region. Positions 17–28 (PSRSRCPPSAQP) are enriched in low complexity. A WRPW motif motif is present at residues 34–37 (WRPW). Residues 74 to 109 (HPVRLFWPKSKCYDYLYQEAETLLKNFPIQATISFY) form a ripply homology domain region.

The protein belongs to the ripply family. Expressed in the embryonic anterior presomitic mesoderm. First expressed in S-I at 8.5 dpc, where expression is maintained until 13.5 dpc, with an additional stripe of expression sometimes seen in the rostral part of S0 and S-I.

It localises to the nucleus. Plays a role in somitogenesis. Required for somite segregation and establishment of rostrocaudal polarity in somites. The protein is Protein ripply2 of Mus musculus (Mouse).